The following is a 494-amino-acid chain: UDP-glucose 6-dehydrogenase (494 aa).

Residues 11 to 16, Asp36, Arg41, 89 to 93, and 130 to 132 contribute to the NAD(+) site; these read GAGYVG, VNTPT, and STV. Residues 88 to 110 are disordered; sequence SVNTPTKTYGMGKGRAADLKYIE. Residues 129-135 are allosteric switch region; it reads KSTVPVR. The Proton donor/acceptor role is filled by Glu161. Substrate is bound by residues 161–165, 220–224, Arg260, and 267–273; these read EFLAE, KLAAN, and KASVGFG. Position 165 (Glu165) interacts with NAD(+). Lys220 acts as the Proton donor/acceptor in catalysis. Cys276 acts as the Nucleophile in catalysis. 276-279 serves as a coordination point for NAD(+); sequence CFQK. Positions 321 to 325 are important for formation of active hexamer structure; that stretch reads SLFNT. 338–339 serves as a coordination point for substrate; it reads FK. Arg346 serves as a coordination point for NAD(+). Arg442 serves as a coordination point for substrate. Residues 466-494 are disordered; it reads VSAKRIPFASSCEIPKFSLQDPPVKKPRV.

This sequence belongs to the UDP-glucose/GDP-mannose dehydrogenase family. As to quaternary structure, homohexamer.

The enzyme catalyses UDP-alpha-D-glucose + 2 NAD(+) + H2O = UDP-alpha-D-glucuronate + 2 NADH + 3 H(+). The protein operates within nucleotide-sugar biosynthesis; UDP-alpha-D-glucuronate biosynthesis; UDP-alpha-D-glucuronate from UDP-alpha-D-glucose: step 1/1. UDP-alpha-D-xylose (UDX) acts as a feedback inhibitor. It binds at the same site as the substrate, but functions as allosteric inhibitor by triggering a conformation change that disrupts the active hexameric ring structure and gives rise to an inactive, horseshoe-shaped hexamer. Catalyzes the formation of UDP-alpha-D-glucuronate, a constituent of complex glycosaminoglycans. Required for the biosynthesis of chondroitin sulfate and heparan sulfate. Required for embryonic development via its role in the biosynthesis of glycosaminoglycans. The protein is UDP-glucose 6-dehydrogenase (UGDH) of Gallus gallus (Chicken).